The chain runs to 530 residues: Inactive ubiquitin carboxyl-terminal hydrolase 17-like protein 8 (530 aa).

One can recognise a USP domain in the interval 80–375 (AGLQNMGNTC…QAYVLFYIQK (296 aa)). Over residues 382-392 (SESVSRGREPR) the composition is skewed to basic and acidic residues. Disordered stretches follow at residues 382–412 (SESV…KRDH) and 493–530 (NSTD…LVCQ). The segment covering 495–510 (TDQESMNTGTLASLQG) has biased composition (polar residues). A compositionally biased stretch (basic residues) spans 511–524 (RTRRSKGKNKHSKR).

The protein belongs to the peptidase C19 family. USP17 subfamily.

It is found in the nucleus. It localises to the endoplasmic reticulum. This chain is Inactive ubiquitin carboxyl-terminal hydrolase 17-like protein 8 (USP17L8), found in Homo sapiens (Human).